Reading from the N-terminus, the 92-residue chain is Small integral membrane protein 12 (92 aa).

A helical membrane pass occupies residues 15 to 34 (YVTFPVAFVVGAVGYHLEWF).

This sequence belongs to the SMIM12 family.

It localises to the membrane. This Nomascus leucogenys (Northern white-cheeked gibbon) protein is Small integral membrane protein 12 (SMIM12).